Consider the following 128-residue polypeptide: Large ribosomal subunit protein bL20c (128 aa).

Belongs to the bacterial ribosomal protein bL20 family. As to quaternary structure, component of the chloroplast large ribosomal subunit (LSU). Mature 70S chloroplast ribosomes of higher plants consist of a small (30S) and a large (50S) subunit. The 30S small subunit contains 1 molecule of ribosomal RNA (16S rRNA) and 24 different proteins. The 50S large subunit contains 3 rRNA molecules (23S, 5S and 4.5S rRNA) and 33 different proteins.

The protein resides in the plastid. It localises to the chloroplast. Component of the chloroplast ribosome (chloro-ribosome), a dedicated translation machinery responsible for the synthesis of chloroplast genome-encoded proteins, including proteins of the transcription and translation machinery and components of the photosynthetic apparatus. This chain is Large ribosomal subunit protein bL20c (rpl20), found in Spinacia oleracea (Spinach).